An 883-amino-acid polypeptide reads, in one-letter code: 3-hydroxy-3-methylglutaryl-coenzyme A reductase (883 aa).

The Cytoplasmic portion of the chain corresponds to 1–9 (MLSRLFRMH). A helical transmembrane segment spans residues 10–39 (GQFVASHPWEVIVGTVTLTICMMSMNMFTG). Over 40-56 (NDKICGWNYACPKFEED) the chain is Lumenal. Residues 57-78 (VLSSDIIILTITRCIAILYIYF) form a helical membrane-spanning segment. At 79–89 (QFQNLRQLGSK) the chain is on the cytoplasmic side. A helical membrane pass occupies residues 90-114 (YILGIAGLFTIFSSFVFSTVVIHFL). The Lumenal portion of the chain corresponds to 115–123 (DKELTGLNE). The chain crosses the membrane as a helical span at residues 124–149 (ALPFFLLLIDLSKASALAKFALSSNS). The Cytoplasmic segment spans residues 150-159 (QDEVRDNIAR). A helical transmembrane segment spans residues 160 to 187 (GMAILGPTFTLEALVECLVIGVGTMSGV). The Lumenal segment spans residues 188-191 (RQLE). Residues 192–220 (IMCCFGCMSVLANYFAFMTFFPACVSLVL) traverse the membrane as a helical segment. Residues 221-249 (ELSRESREGRPIWQLSQFASVLEEEEDNK) lie on the Cytoplasmic side of the membrane. Residues 250 to 276 (PNPVTQRVKMIMSLGLVLVHAHSRWIS) traverse the membrane as a helical segment. The Lumenal segment spans residues 277–316 (EPSSQNSTSISDHEVTTMLDDMMPKRVEPSMPLWQFYLSR). Residue Asn282 is glycosylated (N-linked (GlcNAc...) asparagine). A helical transmembrane segment spans residues 317-341 (MVTMDVEQIITLGLALLLAVKYIFF). Topologically, residues 342–883 (EQTETESTFS…LPGTCTKKAA (542 aa)) are cytoplasmic. Residues 373–396 (REPEQEKTVHVSTTEEASSKEETE) are disordered. Catalysis depends on charge relay system residues Glu554, Lys686, and Asp762. The active-site Proton donor is the His861.

The protein belongs to the HMG-CoA reductase family. Homotetramer. Homodimer.

It is found in the endoplasmic reticulum membrane. It localises to the peroxisome membrane. The enzyme catalyses (R)-mevalonate + 2 NADP(+) + CoA = (3S)-3-hydroxy-3-methylglutaryl-CoA + 2 NADPH + 2 H(+). It participates in metabolic intermediate biosynthesis; (R)-mevalonate biosynthesis; (R)-mevalonate from acetyl-CoA: step 3/3. In terms of biological role, catalyzes the conversion of (3S)-hydroxy-3-methylglutaryl-CoA (HMG-CoA) to mevalonic acid, the rate-limiting step in the synthesis of cholesterol and other isoprenoids, thus plays a critical role in cellular cholesterol homeostasis. This Xenopus laevis (African clawed frog) protein is 3-hydroxy-3-methylglutaryl-coenzyme A reductase (hmgcr).